The chain runs to 365 residues: Protein dbl-1 (365 aa).

An N-terminal signal peptide occupies residues 1-42; it reads MNDSVRTTTTISSTKSLVHSFQLSAILHLFLLISFTPMSAAA. The propeptide occupies 43-244; it reads DQHASHATRR…KRSAQTGNSE (202 aa). Residues Asn110, Asn143, and Asn167 are each glycosylated (N-linked (GlcNAc...) asparagine). The disordered stretch occupies residues 231-259; that stretch reads SVRRKRSAQTGNSERKNRKKGRKHHNTEA. A compositionally biased stretch (basic residues) spans 246-255; that stretch reads KNRKKGRKHH. Cystine bridges form between Cys264-Cys330, Cys293-Cys362, and Cys297-Cys364. An N-linked (GlcNAc...) asparagine glycan is attached at Asn306.

Belongs to the TGF-beta family. In terms of assembly, homodimer; disulfide-linked. Interacts with drag-1. As to expression, expressed in embryos just prior to hatching and remains constant in most cells throughout the larval and adult stages. Expressed by AVA command interneurons.

It is found in the secreted. Functionally, ligand for the serine/threonine-protein kinase receptor type-1 sma-6 which activates a TGF-beta-like signaling pathway. Multifunctional protein that is involved in body size, male ectodermal patterning, innate immunity, lipid metabolism and neural plasticity. Dose-dependent regulator of body size, probably influencing the sizes of some or all cells rather than their number. Plays a role in patterning of male-specific genital sensilla (simple sense organs), known as rays, and mating-associated structures, spicules. Plays a protective role in response to infection by the Gram-negative bacterium S.marcescens, by activating expression of genes involved in innate immunity. Regulator of lipid homeostasis, acting non cell-autonomously in the hypodermis; partly dependent on the Insulin/IGF-1-like signaling (IIS) mediated pathway. Required for aversive olfactory learning of pathogenic bacteria in adults. Involved in gland cell morphology, possibly via activation of a Smad-independent TGF-beta signaling pathway. Required to oppose the autoregulation of expression of Runt-related transcription factor rnt-1. In Caenorhabditis elegans, this protein is Protein dbl-1.